The sequence spans 87 residues: MERKLALLLLLGMITLASSGLREKHVQKLVTLIPNDTLRSIMKTIVHKLAKTQFGCPAYEGYCMNHCQDIERHDGSCHGFKCKCEKS.

The N-terminal stretch at 1–19 (MERKLALLLLLGMITLASS) is a signal peptide. Residues 20 to 27 (GLREKHVQ) constitute a propeptide that is removed on maturation. Positions 53 to 87 (QFGCPAYEGYCMNHCQDIERHDGSCHGFKCKCEKS) constitute a BetaSPN-type CS-alpha/beta domain. Cystine bridges form between Cys-56–Cys-77, Cys-63–Cys-82, and Cys-67–Cys-84.

As to expression, expressed by the venom gland.

Its subcellular location is the secreted. Inhibits voltage-gated potassium channel. This chain is Potassium channel toxin Tdi-beta-KTx, found in Tityus discrepans (Venezuelan scorpion).